Reading from the N-terminus, the 424-residue chain is Serpin E3 (424 aa).

An N-terminal signal peptide occupies residues 1-20; it reads MPPFLITLFLFHSCCLRANG. Asparagine 46 carries an N-linked (GlcNAc...) asparagine glycan. The segment at 143 to 174 is disordered; the sequence is DLSEPNSTAIQTSEGASRETAGGGPSEGPGGW. Over residues 146–157 the composition is skewed to polar residues; sequence EPNSTAIQTSEG. The span at 163 to 173 shows a compositional bias: gly residues; that stretch reads AGGGPSEGPGG.

The protein belongs to the serpin family.

It localises to the secreted. In terms of biological role, probable serine protease inhibitor. The polypeptide is Serpin E3 (SERPINE3) (Homo sapiens (Human)).